Consider the following 286-residue polypeptide: Perivitellin-2 31 kDa subunit (286 aa).

An N-terminal signal peptide occupies residues 1–30 (MVKKIHFVMERHASIVAFLLAVLALTESQA). Asn-101 carries N-linked (GlcNAc...) asparagine glycosylation.

This sequence belongs to the tectonin family. As to quaternary structure, perivitellin-2 is a dimer of heterodimers held together head-to-tail by non-covalent forces. The heterodimer is composed of the tachylectin subunit (31 kDa) and the MACPF subunit (67 kDa) that are disulfide-linked. PV2 is a very high density lipoprotein (VHDL). It contains 3.75% of lipids. The major lipid classes are free sterols and phospholipids and also have significant quantities of energy-providing triacylglycerides and free fatty acids. As to expression, produced by albumen secretory cells. Found in developing eggs.

The protein resides in the secreted. The protein localises to the target cell membrane. Its function is as follows. The egg defensive protein perivitellin-2 is a pore-forming two-subunit glycoprotein that affects both the nervous and digestive systems of mammals. In addition, it is a source of both structural and energetic molecules during embryonic development. The tachylectin subunit (31 kDa) binds target membranes while the MACPF subunit (67 kDa) disrupts lipid bilayers forming large pores (inner diameter of about 5.6 nm) altering the plasma membrance conductance. Both in vivo and in vitro, the protein shows wide pH range stability and is resistant to enzymatic proteolysis from gastrointestinal environments. It is cytotoxic to both epithelial and immune cells from the digestive system of mammals. It induces enterocyte death by a lytic mechanism and disrupts enterocyte monolayers in a dose-dependent manner. After oral administration to mice, it binds enterocytes and induces large dose-dependent morphological changes on their small intestine mucosa, reducing the absorptive surface. Additionally, it is detected in the Peyer's patches where it activates lymphoid follicles and triggers apoptosis. The toxin can also traverse the intestinal barrier and induce oral adaptive immunity with evidence of circulating antibody response. The toxin also shows hemagglutination properties thanks to the tachylectin subunit, but has no hemolytic activity. In addition to enterotoxin activity, the toxin also acts as a neurotoxin, since an intraperitoneal injection can induce paralysis of the mice rear limbs, followed by death. The protein is Perivitellin-2 31 kDa subunit of Pomacea maculata (Giant applesnail).